The sequence spans 121 residues: Immunoglobulin kappa variable 2-40 (121 aa).

Residues 1-19 (MRLPAQLLGLLMLWVPGSS) form the signal peptide. One can recognise an Ig-like domain in the interval 20–121 (EDIVMTQTPL…YYCMQRIEFP (102 aa)). A framework-1 region spans residues 21-43 (DIVMTQTPLSLPVTPGEPASISC). A disulfide bridge links Cys-43 with Cys-114. Positions 44 to 60 (RSSQSLLDSDDGNTYLD) are complementarity-determining-1. The tract at residues 61 to 75 (WYLQKPGQSPQLLIY) is framework-2. The tract at residues 76-82 (TLSYRAS) is complementarity-determining-2. The framework-3 stretch occupies residues 83 to 114 (GVPDRFSGSGSGTDFTLKISRVEAEDVGVYYC). The tract at residues 115 to 121 (MQRIEFP) is complementarity-determining-3.

Immunoglobulins are composed of two identical heavy chains and two identical light chains; disulfide-linked.

The protein localises to the secreted. The protein resides in the cell membrane. V region of the variable domain of immunoglobulin light chains that participates in the antigen recognition. Immunoglobulins, also known as antibodies, are membrane-bound or secreted glycoproteins produced by B lymphocytes. In the recognition phase of humoral immunity, the membrane-bound immunoglobulins serve as receptors which, upon binding of a specific antigen, trigger the clonal expansion and differentiation of B lymphocytes into immunoglobulins-secreting plasma cells. Secreted immunoglobulins mediate the effector phase of humoral immunity, which results in the elimination of bound antigens. The antigen binding site is formed by the variable domain of one heavy chain, together with that of its associated light chain. Thus, each immunoglobulin has two antigen binding sites with remarkable affinity for a particular antigen. The variable domains are assembled by a process called V-(D)-J rearrangement and can then be subjected to somatic hypermutations which, after exposure to antigen and selection, allow affinity maturation for a particular antigen. This Homo sapiens (Human) protein is Immunoglobulin kappa variable 2-40.